The primary structure comprises 306 residues: tRNA pseudouridine synthase B (306 aa).

Aspartate 43 (nucleophile) is an active-site residue.

The protein belongs to the pseudouridine synthase TruB family. Type 1 subfamily.

It catalyses the reaction uridine(55) in tRNA = pseudouridine(55) in tRNA. Functionally, responsible for synthesis of pseudouridine from uracil-55 in the psi GC loop of transfer RNAs. This Lacticaseibacillus casei (strain BL23) (Lactobacillus casei) protein is tRNA pseudouridine synthase B.